Here is a 458-residue protein sequence, read N- to C-terminus: V-type sodium ATPase subunit B (458 aa).

It belongs to the ATPase alpha/beta chains family.

Its function is as follows. Involved in ATP-driven sodium extrusion. The chain is V-type sodium ATPase subunit B (ntpB) from Enterococcus hirae (strain ATCC 9790 / DSM 20160 / JCM 8729 / LMG 6399 / NBRC 3181 / NCIMB 6459 / NCDO 1258 / NCTC 12367 / WDCM 00089 / R).